The chain runs to 145 residues: D-aminoacyl-tRNA deacylase (145 aa).

The Gly-cisPro motif, important for rejection of L-amino acids motif lies at 137–138 (GP).

The protein belongs to the DTD family. Homodimer.

The protein resides in the cytoplasm. The catalysed reaction is glycyl-tRNA(Ala) + H2O = tRNA(Ala) + glycine + H(+). It carries out the reaction a D-aminoacyl-tRNA + H2O = a tRNA + a D-alpha-amino acid + H(+). Its function is as follows. An aminoacyl-tRNA editing enzyme that deacylates mischarged D-aminoacyl-tRNAs. Also deacylates mischarged glycyl-tRNA(Ala), protecting cells against glycine mischarging by AlaRS. Acts via tRNA-based rather than protein-based catalysis; rejects L-amino acids rather than detecting D-amino acids in the active site. By recycling D-aminoacyl-tRNA to D-amino acids and free tRNA molecules, this enzyme counteracts the toxicity associated with the formation of D-aminoacyl-tRNA entities in vivo and helps enforce protein L-homochirality. In Pseudomonas putida (strain ATCC 47054 / DSM 6125 / CFBP 8728 / NCIMB 11950 / KT2440), this protein is D-aminoacyl-tRNA deacylase.